The following is a 249-amino-acid chain: 6-phosphogluconolactonase 3 (249 aa).

The protein belongs to the glucosamine/galactosamine-6-phosphate isomerase family. 6-phosphogluconolactonase subfamily.

The protein resides in the cytoplasm. It localises to the nucleus. The enzyme catalyses 6-phospho-D-glucono-1,5-lactone + H2O = 6-phospho-D-gluconate + H(+). The protein operates within carbohydrate degradation; pentose phosphate pathway; D-ribulose 5-phosphate from D-glucose 6-phosphate (oxidative stage): step 2/3. Hydrolysis of 6-phosphogluconolactone to 6-phosphogluconate. This chain is 6-phosphogluconolactonase 3 (SOL3), found in Saccharomyces cerevisiae (strain RM11-1a) (Baker's yeast).